The chain runs to 451 residues: Protein tweety homolog 1-B (451 aa).

At 1 to 43 the chain is on the extracellular side; that stretch reads MSTSHGYRASWWTYILHQVPHTNFQFEVVDNQFAPQEWSYQQA. The chain crosses the membrane as a helical span at residues 44–64; sequence LLFLASIAGLCLAISLVLICV. Residues 65-86 are Cytoplasmic-facing; that stretch reads YLIKFCCCASQEDDDSKSHRVC. The chain crosses the membrane as a helical span at residues 87–107; it reads CVTWSCVAAVIICCAGIGIGF. Topologically, residues 108–214 are extracellular; sequence YGNSETNDGV…QVNFIEDYRW (107 aa). Residue N128 is glycosylated (N-linked (GlcNAc...) asparagine). A helical membrane pass occupies residues 215–235; that stretch reads LAYILLLLLDLIICLFTLLSL. At 236–240 the chain is on the cytoplasmic side; the sequence is AKQIK. A helical membrane pass occupies residues 241–261; the sequence is WLVIVMTVVSFFVLLLSWGSM. Over 262-390 the chain is Extracellular; that stretch reads GLEMATAVGL…LKGLCYDGME (129 aa). Intrachain disulfides connect C275/C385 and C303/C370. N-linked (GlcNAc...) asparagine glycans are attached at residues N284 and N355. The helical transmembrane segment at 391 to 411 threads the bilayer; it reads GILFLLLFSFLSALSFTAAVC. Residues 412 to 451 are Cytoplasmic-facing; sequence SLPRAWKRFRNRDLDYDDMDEDDPFNPQESKRFVQWQSSI.

The protein belongs to the tweety family. Homotetramer; disulfide-linked. Homodimer.

It localises to the cell membrane. The enzyme catalyses chloride(in) = chloride(out). It carries out the reaction L-glutamate(out) = L-glutamate(in). Functionally, may act as a calcium-independent, swelling-dependent volume-regulated anion channel (VRAC-swell) which plays a pivotal role in the process of regulatory volume decrease (RVD) in the brain through the efflux of anions like chloride and organic osmolytes like glutamate. This is Protein tweety homolog 1-B (ttyh1-b) from Xenopus laevis (African clawed frog).